Here is a 117-residue protein sequence, read N- to C-terminus: G antigen 12J (117 aa).

The interval 1 to 117 is disordered; the sequence is MSWRGRSTYY…PEEGEKQSQC (117 aa). Composition is skewed to acidic residues over residues 32 to 45 and 87 to 96; these read FSDE…EEGE and ECEDGPDGQE. Basic and acidic residues predominate over residues 103 to 117; the sequence is EEVKTPEEGEKQSQC.

The protein belongs to the GAGE family.

This chain is G antigen 12J (GAGE12J), found in Homo sapiens (Human).